We begin with the raw amino-acid sequence, 336 residues long: Ornithine carbamoyltransferase, catabolic (336 aa).

Carbamoyl phosphate contacts are provided by residues 62–65, glutamine 89, arginine 113, and 140–143; these read STRT and HPTQ. L-ornithine contacts are provided by residues asparagine 172, aspartate 236, and 240–241; that span reads SM. Carbamoyl phosphate-binding positions include 277 to 278 and arginine 322; that span reads CL.

It belongs to the aspartate/ornithine carbamoyltransferase superfamily. OTCase family.

The protein resides in the cytoplasm. The catalysed reaction is carbamoyl phosphate + L-ornithine = L-citrulline + phosphate + H(+). Its pathway is amino-acid degradation; L-arginine degradation via ADI pathway; carbamoyl phosphate from L-arginine: step 2/2. Functionally, reversibly catalyzes the transfer of the carbamoyl group from carbamoyl phosphate (CP) to the N(epsilon) atom of ornithine (ORN) to produce L-citrulline. This Staphylococcus aureus (strain MRSA252) protein is Ornithine carbamoyltransferase, catabolic.